We begin with the raw amino-acid sequence, 32 residues long: Hainantoxin F8-35.23 (32 aa).

Expressed by the venom gland.

It is found in the secreted. The protein is Hainantoxin F8-35.23 of Cyriopagopus hainanus (Chinese bird spider).